A 398-amino-acid polypeptide reads, in one-letter code: 4-hydroxy-3-methylbut-2-enyl diphosphate reductase (398 aa).

Position 66 (cysteine 66) interacts with [4Fe-4S] cluster. (2E)-4-hydroxy-3-methylbut-2-enyl diphosphate is bound at residue histidine 96. Histidine 96 contacts dimethylallyl diphosphate. Histidine 96 serves as a coordination point for isopentenyl diphosphate. Cysteine 157 contributes to the [4Fe-4S] cluster binding site. Histidine 185 is a (2E)-4-hydroxy-3-methylbut-2-enyl diphosphate binding site. Histidine 185 contributes to the dimethylallyl diphosphate binding site. Histidine 185 is a binding site for isopentenyl diphosphate. The Proton donor role is filled by glutamate 187. Threonine 250 is a (2E)-4-hydroxy-3-methylbut-2-enyl diphosphate binding site. Cysteine 288 contacts [4Fe-4S] cluster. (2E)-4-hydroxy-3-methylbut-2-enyl diphosphate-binding residues include serine 317, serine 318, asparagine 319, and serine 380. Dimethylallyl diphosphate contacts are provided by serine 317, serine 318, asparagine 319, and serine 380. Positions 317, 318, 319, and 380 each coordinate isopentenyl diphosphate.

The protein belongs to the IspH family. The cofactor is [4Fe-4S] cluster.

It carries out the reaction isopentenyl diphosphate + 2 oxidized [2Fe-2S]-[ferredoxin] + H2O = (2E)-4-hydroxy-3-methylbut-2-enyl diphosphate + 2 reduced [2Fe-2S]-[ferredoxin] + 2 H(+). The catalysed reaction is dimethylallyl diphosphate + 2 oxidized [2Fe-2S]-[ferredoxin] + H2O = (2E)-4-hydroxy-3-methylbut-2-enyl diphosphate + 2 reduced [2Fe-2S]-[ferredoxin] + 2 H(+). The protein operates within isoprenoid biosynthesis; dimethylallyl diphosphate biosynthesis; dimethylallyl diphosphate from (2E)-4-hydroxy-3-methylbutenyl diphosphate: step 1/1. Its pathway is isoprenoid biosynthesis; isopentenyl diphosphate biosynthesis via DXP pathway; isopentenyl diphosphate from 1-deoxy-D-xylulose 5-phosphate: step 6/6. Catalyzes the conversion of 1-hydroxy-2-methyl-2-(E)-butenyl 4-diphosphate (HMBPP) into a mixture of isopentenyl diphosphate (IPP) and dimethylallyl diphosphate (DMAPP). Acts in the terminal step of the DOXP/MEP pathway for isoprenoid precursor biosynthesis. In Prochlorococcus marinus (strain AS9601), this protein is 4-hydroxy-3-methylbut-2-enyl diphosphate reductase.